We begin with the raw amino-acid sequence, 429 residues long: 3-phosphoshikimate 1-carboxyvinyltransferase (429 aa).

The 3-phosphoshikimate site is built by lysine 22, serine 23, and arginine 27. Phosphoenolpyruvate is bound at residue lysine 22. Residues glycine 94 and arginine 122 each coordinate phosphoenolpyruvate. 3-phosphoshikimate contacts are provided by serine 167, glutamine 169, aspartate 315, and lysine 342. Glutamine 169 is a phosphoenolpyruvate binding site. Aspartate 315 functions as the Proton acceptor in the catalytic mechanism. Residues arginine 346 and arginine 388 each coordinate phosphoenolpyruvate.

The protein belongs to the EPSP synthase family. In terms of assembly, monomer.

It localises to the cytoplasm. The catalysed reaction is 3-phosphoshikimate + phosphoenolpyruvate = 5-O-(1-carboxyvinyl)-3-phosphoshikimate + phosphate. It participates in metabolic intermediate biosynthesis; chorismate biosynthesis; chorismate from D-erythrose 4-phosphate and phosphoenolpyruvate: step 6/7. In terms of biological role, catalyzes the transfer of the enolpyruvyl moiety of phosphoenolpyruvate (PEP) to the 5-hydroxyl of shikimate-3-phosphate (S3P) to produce enolpyruvyl shikimate-3-phosphate and inorganic phosphate. The chain is 3-phosphoshikimate 1-carboxyvinyltransferase from Geobacter sulfurreducens (strain ATCC 51573 / DSM 12127 / PCA).